Reading from the N-terminus, the 424-residue chain is Tyrosine--tRNA ligase (424 aa).

L-tyrosine is bound at residue Tyr-37. The short motif at 42–51 (PTADSLHLGH) is the 'HIGH' region element. L-tyrosine contacts are provided by Tyr-175 and Gln-179. The 'KMSKS' region signature appears at 235 to 239 (KFGKT). Lys-238 lines the ATP pocket. One can recognise an S4 RNA-binding domain in the interval 357 to 414 (AELQKALVSAQLAPSRSQARTLIQSSSISVNGKKQLKPEYIFTSEDRLLDRYTLLRRG).

Belongs to the class-I aminoacyl-tRNA synthetase family. TyrS type 1 subfamily. In terms of assembly, homodimer.

Its subcellular location is the cytoplasm. The enzyme catalyses tRNA(Tyr) + L-tyrosine + ATP = L-tyrosyl-tRNA(Tyr) + AMP + diphosphate + H(+). In terms of biological role, catalyzes the attachment of tyrosine to tRNA(Tyr) in a two-step reaction: tyrosine is first activated by ATP to form Tyr-AMP and then transferred to the acceptor end of tRNA(Tyr). The sequence is that of Tyrosine--tRNA ligase from Hamiltonella defensa subsp. Acyrthosiphon pisum (strain 5AT).